Consider the following 78-residue polypeptide: UPF0612 protein new22 (78 aa).

The protein belongs to the UPF0612 family.

The polypeptide is UPF0612 protein new22 (new22) (Schizosaccharomyces pombe (strain 972 / ATCC 24843) (Fission yeast)).